The chain runs to 275 residues: Myoblast determination protein 1 homolog (275 aa).

The bHLH domain occupies 84–135 (DRRKAATMRERRRLSKVNDAFETLKRCTSTNPNQRLPKVEILRNAISYIESL). A disordered region spans residues 234–275 (EGHEESPCSPHEGSVLSDTGTTAPSPTSCPQQQAQETIYQVL). Polar residues predominate over residues 249–275 (LSDTGTTAPSPTSCPQQQAQETIYQVL).

Efficient DNA binding requires dimerization with another bHLH protein. From mid-gastrula to just before somite formation, expressed in cells adjacent to axial mesoderm. Subsequently, during the anterior-to-posterior wave of somite formation and maturation, expressed within particular regions of each somite. Expressed in both muscle and non-muscle cells.

Its subcellular location is the nucleus. In terms of biological role, may act as a transcriptional activator that promotes transcription of muscle-specific target genes and plays a role in muscle differentiation. This is Myoblast determination protein 1 homolog (myod1) from Danio rerio (Zebrafish).